Consider the following 121-residue polypeptide: Large ribosomal subunit protein bL20 (121 aa).

Belongs to the bacterial ribosomal protein bL20 family.

Functionally, binds directly to 23S ribosomal RNA and is necessary for the in vitro assembly process of the 50S ribosomal subunit. It is not involved in the protein synthesizing functions of that subunit. This Petrotoga mobilis (strain DSM 10674 / SJ95) protein is Large ribosomal subunit protein bL20.